The following is a 553-amino-acid chain: Carboxypeptidase Y homolog A (553 aa).

Positions 1–17 are cleaved as a signal peptide; sequence MRVLSTTLLIGAAAAAV. Residues 18-134 constitute a propeptide that is removed on maturation; the sequence is SPPQQVLQAP…RLEAFDLRVK (117 aa). Intrachain disulfides connect cysteine 189–cysteine 428, cysteine 323–cysteine 337, cysteine 347–cysteine 370, cysteine 354–cysteine 363, and cysteine 392–cysteine 398. Asparagine 220 is a glycosylation site (N-linked (GlcNAc...) asparagine). The active site involves serine 276. Residue aspartate 467 is part of the active site. Residue asparagine 518 is glycosylated (N-linked (GlcNAc...) asparagine). The active site involves histidine 529.

The protein belongs to the peptidase S10 family.

Its subcellular location is the vacuole. The enzyme catalyses Release of a C-terminal amino acid with broad specificity.. In terms of biological role, vacuolar carboxypeptidase involved in degradation of small peptides. Digests preferentially peptides containing an aliphatic or hydrophobic residue in P1' position, as well as methionine, leucine or phenylalanine in P1 position of ester substrate. The chain is Carboxypeptidase Y homolog A (cpyA) from Talaromyces stipitatus (strain ATCC 10500 / CBS 375.48 / QM 6759 / NRRL 1006) (Penicillium stipitatum).